The primary structure comprises 288 residues: MSNLKQLRTRIKSVKSTQKITKAMQLVSASKMTKIKSQIANSNFYIEAISKMMSAILAIDMYELSIEGQKFFNTVPNKVNLLIVMTSQRGLCGTFNYNIIKQVKNDIKDLENKGKQIKLIIIGKKGYEALKRQYANYIDSYFELSKIHDEKLILQVKQKIMSAAYNLEVSNCVIYFNKFKNAMTQIMTRQQILPVEKSKDDSTVKKYHYEYEGETLISNLISLYVNSQINYALLQNRASEEGARMTAMENATNNANDLISKLVLKLNRSRQAIITKELIEIIAGSEAV.

This sequence belongs to the ATPase gamma chain family. In terms of assembly, F-type ATPases have 2 components, CF(1) - the catalytic core - and CF(0) - the membrane proton channel. CF(1) has five subunits: alpha(3), beta(3), gamma(1), delta(1), epsilon(1). CF(0) has three main subunits: a, b and c.

It localises to the cell inner membrane. Produces ATP from ADP in the presence of a proton gradient across the membrane. The gamma chain is believed to be important in regulating ATPase activity and the flow of protons through the CF(0) complex. This is ATP synthase gamma chain from Rickettsia canadensis (strain McKiel).